The following is a 290-amino-acid chain: 33 kDa chaperonin (290 aa).

2 disulfide bridges follow: Cys-235–Cys-237 and Cys-268–Cys-271.

It belongs to the HSP33 family. Post-translationally, under oxidizing conditions two disulfide bonds are formed involving the reactive cysteines. Under reducing conditions zinc is bound to the reactive cysteines and the protein is inactive.

Its subcellular location is the cytoplasm. Functionally, redox regulated molecular chaperone. Protects both thermally unfolding and oxidatively damaged proteins from irreversible aggregation. Plays an important role in the bacterial defense system toward oxidative stress. The sequence is that of 33 kDa chaperonin from Streptococcus pneumoniae (strain CGSP14).